A 125-amino-acid polypeptide reads, in one-letter code: Ribosome maturation factor RimP (125 aa).

This sequence belongs to the RimP family.

Its subcellular location is the cytoplasm. Its function is as follows. Required for maturation of 30S ribosomal subunits. In Rickettsia canadensis (strain McKiel), this protein is Ribosome maturation factor RimP.